The following is a 60-amino-acid chain: Pepsin-3 (60 aa).

Positions 1–35 (INVPLTRHKSMRESLREKGIELPYQDPAIKYRPEF) are cleaved as a propeptide — activation peptide.

The protein belongs to the peptidase A1 family.

The protein is Pepsin-3 of Thunnus orientalis (North Pacific bluefin tuna).